The following is a 159-amino-acid chain: 2-C-methyl-D-erythritol 2,4-cyclodiphosphate synthase (159 aa).

Residues Asp-10 and His-12 each contribute to the a divalent metal cation site. Residues 10 to 12 and 37 to 38 contribute to the 4-CDP-2-C-methyl-D-erythritol 2-phosphate site; these read DVH and HS. His-45 provides a ligand contact to a divalent metal cation. Residues 59–61, 64–68, 103–109, 135–138, Phe-142, and Arg-145 contribute to the 4-CDP-2-C-methyl-D-erythritol 2-phosphate site; these read DIG, FLDTD, AQAPKML, and TTTE.

This sequence belongs to the IspF family. Homotrimer. It depends on a divalent metal cation as a cofactor.

The enzyme catalyses 4-CDP-2-C-methyl-D-erythritol 2-phosphate = 2-C-methyl-D-erythritol 2,4-cyclic diphosphate + CMP. Its pathway is isoprenoid biosynthesis; isopentenyl diphosphate biosynthesis via DXP pathway; isopentenyl diphosphate from 1-deoxy-D-xylulose 5-phosphate: step 4/6. Functionally, involved in the biosynthesis of isopentenyl diphosphate (IPP) and dimethylallyl diphosphate (DMAPP), two major building blocks of isoprenoid compounds. Catalyzes the conversion of 4-diphosphocytidyl-2-C-methyl-D-erythritol 2-phosphate (CDP-ME2P) to 2-C-methyl-D-erythritol 2,4-cyclodiphosphate (ME-CPP) with a corresponding release of cytidine 5-monophosphate (CMP). The sequence is that of 2-C-methyl-D-erythritol 2,4-cyclodiphosphate synthase from Francisella tularensis subsp. holarctica (strain FTNF002-00 / FTA).